The primary structure comprises 210 residues: Thymidylate kinase (210 aa).

An ATP-binding site is contributed by 10 to 17 (GPEGAGKS).

The protein belongs to the thymidylate kinase family.

It carries out the reaction dTMP + ATP = dTDP + ADP. Its function is as follows. Phosphorylation of dTMP to form dTDP in both de novo and salvage pathways of dTTP synthesis. This is Thymidylate kinase from Pseudomonas paraeruginosa (strain DSM 24068 / PA7) (Pseudomonas aeruginosa (strain PA7)).